The sequence spans 948 residues: Phosphoenolpyruvate carboxylase (948 aa).

Residues H138 and K610 contribute to the active site.

It belongs to the PEPCase type 1 family. Mg(2+) is required as a cofactor.

The enzyme catalyses oxaloacetate + phosphate = phosphoenolpyruvate + hydrogencarbonate. Its function is as follows. Forms oxaloacetate, a four-carbon dicarboxylic acid source for the tricarboxylic acid cycle. This Streptococcus sanguinis (strain SK36) protein is Phosphoenolpyruvate carboxylase.